The chain runs to 198 residues: MLREVIYCGICSYPPEYCEFSGKLKRCKVWLSENHADLYAKLYGTDDNTQEVEAVTNKLAESSIGEAREEKLEKDLLKIQKKQENREQRELAKKLSSKVIIKREARTKRKFIVAISGLEVFDIDMKKLAKTFASRFATGCSVSKNAEKKEEVVIQGDVMDEVETYIHSLLEEKGLKDVKVETIDAKKKKKPAAEGAAK.

Residues 99 to 170 form the SUI1 domain; the sequence is VIIKREARTK…EVETYIHSLL (72 aa).

This sequence belongs to the DENR family. Interacts with the 40S ribosomal subunit.

Its subcellular location is the cytoplasm. The chain is Translation machinery-associated protein 22 (TMA22) from Saccharomyces cerevisiae (strain YJM789) (Baker's yeast).